The primary structure comprises 536 residues: Velvet complex subunit B (536 aa).

Residues 1-26 show a composition bias toward polar residues; it reads MIQRTTDPAAGSSTSGPPTNSLSWGS. Disordered regions lie at residues 1–27, 106–143, 157–409, and 508–536; these read MIQRTTDPAAGSSTSGPPTNSLSWGSR, PNAAQDRGPPMPAKPRRPTNPPPPSNTHGSPPAPAIPF, SAPA…RTLV, and KLPLRNRHGSGSKRRRRGAGGGSDDEESD. In terms of domain architecture, Velvet spans 25-512; the sequence is GSRHNGKLYT…NQQNMKLPLR (488 aa). Positions 114–143 are enriched in pro residues; it reads PPMPAKPRRPTNPPPPSNTHGSPPAPAIPF. Composition is skewed to low complexity over residues 158-170 and 190-265; these read APASDRSPSSASA and PYGP…YPPY. The span at 280–305 shows a compositional bias: polar residues; it reads TSNFDHSQPVTSSVDQETNSPVVTTT. Over residues 306–315 the composition is skewed to basic and acidic residues; sequence ARDDDQREGE. A compositionally biased stretch (low complexity) spans 328–342; the sequence is PSNSGAPSTSPTAST. Residues 356–399 are compositionally biased toward basic and acidic residues; sequence EEREGPDGGPDLREPIEPGSTKAREEEDARTGTEKGDPKDKSDA. Residues 400 to 409 show a composition bias toward polar residues; that stretch reads QRATYTRTLV. Positions 511-525 are enriched in basic residues; that stretch reads LRNRHGSGSKRRRRG.

The protein belongs to the velvet family. VelB subfamily. Component of the heterotrimeric velvet complex composed of laeA, veA and velB; VeA acting as a bridging protein between laeA and velB. Forms a heterodimeric complex with vosA; the formation of the velB-vosA complex is light-dependent.

The protein localises to the nucleus. The protein resides in the cytoplasm. In terms of biological role, component of the velvet transcription factor complex that controls sexual/asexual developmental ratio in response to light, promoting sexual development in the darkness while stimulating asexual sporulation under illumination. The velvet complex acts as a global regulator for secondary metabolite gene expression. Component of the velB-VosA heterodimeric complex that plays a dual role in activating genes associated with spore maturation and repressing certain development-associated genes. The velB-VosA complex binds DNA through the DNA-binding domain of vosA that recognizes an 11-nucleotide consensus sequence 5'-CTGGCCGCGGC-3' consisting of two motifs in the promoters of key developmental regulatory genes. The chain is Velvet complex subunit B from Schizophyllum commune (strain H4-8 / FGSC 9210) (Split gill fungus).